The sequence spans 454 residues: CCA-adding enzyme (454 aa).

Positions 53 and 56 each coordinate ATP. CTP-binding residues include serine 53 and lysine 56. 3 residues coordinate Mg(2+): aspartate 65, aspartate 67, and aspartate 119. Residues histidine 142, lysine 161, and tyrosine 170 each coordinate ATP. Histidine 142, lysine 161, and tyrosine 170 together coordinate CTP.

It belongs to the tRNA nucleotidyltransferase/poly(A) polymerase family. Archaeal CCA-adding enzyme subfamily. As to quaternary structure, homodimer. Mg(2+) is required as a cofactor.

The enzyme catalyses a tRNA precursor + 2 CTP + ATP = a tRNA with a 3' CCA end + 3 diphosphate. The catalysed reaction is a tRNA with a 3' CCA end + 2 CTP + ATP = a tRNA with a 3' CCACCA end + 3 diphosphate. In terms of biological role, catalyzes the addition and repair of the essential 3'-terminal CCA sequence in tRNAs without using a nucleic acid template. Adds these three nucleotides in the order of C, C, and A to the tRNA nucleotide-73, using CTP and ATP as substrates and producing inorganic pyrophosphate. tRNA 3'-terminal CCA addition is required both for tRNA processing and repair. Also involved in tRNA surveillance by mediating tandem CCA addition to generate a CCACCA at the 3' terminus of unstable tRNAs. While stable tRNAs receive only 3'-terminal CCA, unstable tRNAs are marked with CCACCA and rapidly degraded. The polypeptide is CCA-adding enzyme (Thermococcus gammatolerans (strain DSM 15229 / JCM 11827 / EJ3)).